Here is a 192-residue protein sequence, read N- to C-terminus: MRLIFLGPPGAGKGTQAKHLTERYGIPQLSTGDMLRAAVAQATEVGKRAKAVMDAGQLVSDEIVNEIVSDRIDAPDCAKGFILDGYPRTVPQAVALDRMLEEKNLKLDAVIELKVDEAALVRRMENRVAETVAAGGTVRSDDNPEAFRRRLQEYREKTAPLSEHYARTGRLKTVDGMADVKTVTAEIEKILA.

Residue 10–15 (GAGKGT) coordinates ATP. Residues 30–59 (STGDMLRAAVAQATEVGKRAKAVMDAGQLV) are NMP. AMP-binding positions include threonine 31, arginine 36, 57 to 59 (QLV), 85 to 88 (GYPR), and glutamine 92. Positions 126 to 142 (NRVAETVAAGGTVRSDD) are LID. ATP is bound at residue arginine 127. Positions 139 and 150 each coordinate AMP. Alanine 178 is an ATP binding site.

Belongs to the adenylate kinase family. Monomer.

Its subcellular location is the cytoplasm. The enzyme catalyses AMP + ATP = 2 ADP. Its pathway is purine metabolism; AMP biosynthesis via salvage pathway; AMP from ADP: step 1/1. In terms of biological role, catalyzes the reversible transfer of the terminal phosphate group between ATP and AMP. Plays an important role in cellular energy homeostasis and in adenine nucleotide metabolism. This chain is Adenylate kinase, found in Sinorhizobium medicae (strain WSM419) (Ensifer medicae).